A 572-amino-acid polypeptide reads, in one-letter code: Formate--tetrahydrofolate ligase (572 aa).

Thr65 to Thr72 serves as a coordination point for ATP.

Belongs to the formate--tetrahydrofolate ligase family.

The enzyme catalyses (6S)-5,6,7,8-tetrahydrofolate + formate + ATP = (6R)-10-formyltetrahydrofolate + ADP + phosphate. Its pathway is one-carbon metabolism; tetrahydrofolate interconversion. This Chloroflexus aurantiacus (strain ATCC 29366 / DSM 635 / J-10-fl) protein is Formate--tetrahydrofolate ligase.